A 177-amino-acid polypeptide reads, in one-letter code: Negative modulator of initiation of replication (177 aa).

This sequence belongs to the SeqA family. As to quaternary structure, homodimer. Polymerizes to form helical filaments.

The protein resides in the cytoplasm. Negative regulator of replication initiation, which contributes to regulation of DNA replication and ensures that replication initiation occurs exactly once per chromosome per cell cycle. Binds to pairs of hemimethylated GATC sequences in the oriC region, thus preventing assembly of replication proteins and re-initiation at newly replicated origins. Repression is relieved when the region becomes fully methylated. This is Negative modulator of initiation of replication from Vibrio cholerae serotype O1 (strain ATCC 39315 / El Tor Inaba N16961).